A 21-amino-acid chain; its full sequence is Glutathione S-transferase 1 (21 aa).

Belongs to the GST superfamily. Phi family.

It carries out the reaction RX + glutathione = an S-substituted glutathione + a halide anion + H(+). In terms of biological role, conjugation of reduced glutathione to a wide number of exogenous and endogenous hydrophobic electrophiles. In plants, may have a detoxification role against certain herbicides. The polypeptide is Glutathione S-transferase 1 (Populus euphratica (Euphrates poplar)).